Reading from the N-terminus, the 129-residue chain is UPF0102 protein Ctha_1382 (129 aa).

This sequence belongs to the UPF0102 family.

This is UPF0102 protein Ctha_1382 from Chloroherpeton thalassium (strain ATCC 35110 / GB-78).